We begin with the raw amino-acid sequence, 39 residues long: Photosystem I reaction center subunit IX (39 aa).

The helical transmembrane segment at 7–27 threads the bilayer; sequence FLTTAPVAFILFSSFVFALFI.

Belongs to the PsaJ family.

It is found in the cellular thylakoid membrane. In terms of biological role, may help in the organization of the PsaE and PsaF subunits. This is Photosystem I reaction center subunit IX from Synechococcus sp. (strain JA-3-3Ab) (Cyanobacteria bacterium Yellowstone A-Prime).